Consider the following 608-residue polypeptide: Prolactin receptor (608 aa).

Positions 1 to 19 (MSSALAYMLLVLSISLLNG) are cleaved as a signal peptide. At 20 to 229 (QSPPGKPEIH…EIPNDFTLKD (210 aa)) the chain is on the extracellular side. 2 consecutive Fibronectin type-III domains span residues 22 to 122 (PPGK…IVEP) and 124 to 224 (PPRN…IPND). A disulfide bridge links Cys-31 with Cys-41. The N-linked (GlcNAc...) asparagine glycan is linked to Asn-54. An intrachain disulfide couples Cys-70 to Cys-81. Residues Asn-99 and Asn-127 are each glycosylated (N-linked (GlcNAc...) asparagine). Zn(2+) contacts are provided by Asp-206 and His-207. Residues 210–214 (WSRWG) carry the WSXWS motif motif. A helical membrane pass occupies residues 230 to 253 (TTVWIIVAVLSAVICLIMVWAVAL). Over 254 to 608 (KGYSMMTCIF…DPTCFMHSFH (355 aa)) the chain is Cytoplasmic. The Box 1 motif motif lies at 262-270 (IFPPVPGPK). Disordered stretches follow at residues 317-355 (DERL…HSLL), 377-419 (KPEN…TRRS), and 466-487 (GAKS…EKGP). Residues 318 to 327 (ERLMPSHSKE) show a composition bias toward basic and acidic residues. Positions 345 to 354 (GHGSYDSHSL) are enriched in low complexity. The segment covering 398-408 (CHTDTSKSTTW) has biased composition (polar residues).

Belongs to the type I cytokine receptor family. Type 1 subfamily. Interacts with SMARCA1. Interacts with NEK3 and VAV2 and this interaction is prolactin-dependent.

The protein localises to the membrane. In terms of biological role, this is a receptor for the anterior pituitary hormone prolactin. This is Prolactin receptor (Prlr) from Mus musculus (Mouse).